The sequence spans 141 residues: Nucleoside triphosphatase NudI (141 aa).

A Nudix hydrolase domain is found at 1 to 141; sequence MRQRTIVCPL…RKTLRLKGLL (141 aa). Residues 38-59 carry the Nudix box motif; sequence GGVESGERIEEALRREIREELG.

The protein belongs to the Nudix hydrolase family. NudI subfamily. As to quaternary structure, monomer. Requires Mg(2+) as cofactor.

It catalyses the reaction a ribonucleoside 5'-triphosphate + H2O = a ribonucleoside 5'-phosphate + diphosphate + H(+). The enzyme catalyses a 2'-deoxyribonucleoside 5'-triphosphate + H2O = a 2'-deoxyribonucleoside 5'-phosphate + diphosphate + H(+). The catalysed reaction is dUTP + H2O = dUMP + diphosphate + H(+). It carries out the reaction dTTP + H2O = dTMP + diphosphate + H(+). It catalyses the reaction dCTP + H2O = dCMP + diphosphate + H(+). In terms of biological role, catalyzes the hydrolysis of nucleoside triphosphates, with a preference for pyrimidine deoxynucleoside triphosphates (dUTP, dTTP and dCTP). This Shigella flexneri serotype 5b (strain 8401) protein is Nucleoside triphosphatase NudI.